A 280-amino-acid chain; its full sequence is Nitrogenase iron-iron protein alpha chain (280 aa).

[8Fe-7S] cluster is bound by residues Cys-5, Cys-31, and Cys-94. [8Fe-9S-C-homocitryl] cluster is bound at residue Cys-213.

The protein belongs to the NifD/NifK/NifE/NifN family. In terms of assembly, hexamer of two alpha, two beta, and two delta chains. It depends on [8Fe-7S] cluster as a cofactor. [8Fe-9S-C-homocitryl] cluster serves as cofactor.

The enzyme catalyses N2 + 8 reduced [2Fe-2S]-[ferredoxin] + 16 ATP + 16 H2O = H2 + 8 oxidized [2Fe-2S]-[ferredoxin] + 2 NH4(+) + 16 ADP + 16 phosphate + 6 H(+). This iron-iron protein is part of the nitrogenase complex that catalyzes the key enzymatic reactions in nitrogen fixation. Other nitrogenase complexes utilize a molybdenum-iron protein or a vanadium-iron protein. This chain is Nitrogenase iron-iron protein alpha chain (anfD), found in Heliomicrobium gestii (Heliobacterium gestii).